The following is a 1072-amino-acid chain: Teashirt homolog 3 (1072 aa).

3 disordered regions span residues 44–71, 130–153, and 228–247; these read ACPS…SETS, PSSE…CGSG, and HYRD…WSKP. Residues 57–71 show a composition bias toward basic and acidic residues; sequence SSHEMDSESHISETS. C2H2-type zinc fingers lie at residues 204–228 and 265–289; these read FRCK…ETGH and LKCM…KTKH. A compositionally biased stretch (basic and acidic residues) spans 228 to 237; it reads HYRDDNHETD. The interval 315–336 is disordered; it reads SLELELPSSPDSTGGTPKATLS. The segment at 376–400 adopts a C2H2-type 3; atypical zinc-finger fold; that stretch reads LKCMECGSSHDTLQELTAHMMVTGH. A compositionally biased stretch (basic and acidic residues) spans 469-481; the sequence is AVLDEKPKEKEKA. Disordered stretches follow at residues 469–489, 569–594, 616–690, 784–815, and 846–888; these read AVLD…EKYD, NSEI…PMPK, EKMK…PLSG, TKGK…TVTT, and TESH…RQSN. Composition is skewed to polar residues over residues 571-593 and 649-660; these read EIVS…SPMP and SSGSGFKSQENS. A Phosphoserine modification is found at Ser-672. 2 stretches are compositionally biased toward low complexity: residues 791 to 815 and 847 to 860; these read GCSL…TVTT and ESHT…SSIS. Residues 882 to 952 constitute a DNA-binding region (homeobox; atypical); that stretch reads RKGRQSNWNP…NVKYQLRRTG (71 aa). 2 C2H2-type zinc fingers span residues 967–989 and 1032–1055; these read FFCN…LESH and YQCK…SKTH.

Belongs to the teashirt C2H2-type zinc-finger protein family. Interacts (via N-terminus) with HDAC1 and HDAC2; the interaction is direct. Found in a trimeric complex with APBB1 and HDAC1; the interaction between HDAC1 and APBB1 is mediated by TSHZ3. Interacts (via homeobox domain) with APBB1 (via PID domain 1). Expressed in cortical neurons.

It is found in the nucleus. Its subcellular location is the cell projection. It localises to the growth cone. Functionally, transcriptional regulator involved in developmental processes. Functions in association with APBB1, SET and HDAC factors as a transcriptional repressor, that inhibits the expression of CASP4. TSHZ3-mediated transcription repression involves the recruitment of histone deacetylases HDAC1 and HDAC2. Associates with chromatin in a region surrounding the CASP4 transcriptional start site(s). Regulates the development of neurons involved in both respiratory rhythm and airflow control. Promotes maintenance of nucleus ambiguus (nA) motoneurons, which govern upper airway function, and establishes a respiratory rhythm generator (RRG) activity compatible with survival at birth. Involved in the differentiation of the proximal uretic smooth muscle cells during developmental processes. Involved in the up-regulation of myocardin, that directs the expression of smooth muscle cells in the proximal ureter. Involved in the modulation of glutamatergic synaptic transmission and long-term synaptic potentiation. In Rattus norvegicus (Rat), this protein is Teashirt homolog 3 (Tshz3).